We begin with the raw amino-acid sequence, 474 residues long: Cysteine--tRNA ligase (474 aa).

Cys27 is a Zn(2+) binding site. The short motif at 29-39 is the 'HIGH' region element; sequence ITPYDHMHVGH. Residues Cys213, His238, and Glu242 each contribute to the Zn(2+) site. The short motif at 271-275 is the 'KMSKS' region element; it reads KMSKS. Lys274 provides a ligand contact to ATP.

Belongs to the class-I aminoacyl-tRNA synthetase family. Requires Zn(2+) as cofactor.

The protein resides in the cytoplasm. The catalysed reaction is tRNA(Cys) + L-cysteine + ATP = L-cysteinyl-tRNA(Cys) + AMP + diphosphate. In Pyrobaculum neutrophilum (strain DSM 2338 / JCM 9278 / NBRC 100436 / V24Sta) (Thermoproteus neutrophilus), this protein is Cysteine--tRNA ligase.